The chain runs to 165 residues: Crossover junction endodeoxyribonuclease RuvC (165 aa).

Residues aspartate 8, glutamate 66, and aspartate 138 contribute to the active site. Positions 8, 66, and 138 each coordinate Mg(2+).

The protein belongs to the RuvC family. In terms of assembly, homodimer which binds Holliday junction (HJ) DNA. The HJ becomes 2-fold symmetrical on binding to RuvC with unstacked arms; it has a different conformation from HJ DNA in complex with RuvA. In the full resolvosome a probable DNA-RuvA(4)-RuvB(12)-RuvC(2) complex forms which resolves the HJ. The cofactor is Mg(2+).

The protein resides in the cytoplasm. The catalysed reaction is Endonucleolytic cleavage at a junction such as a reciprocal single-stranded crossover between two homologous DNA duplexes (Holliday junction).. Its function is as follows. The RuvA-RuvB-RuvC complex processes Holliday junction (HJ) DNA during genetic recombination and DNA repair. Endonuclease that resolves HJ intermediates. Cleaves cruciform DNA by making single-stranded nicks across the HJ at symmetrical positions within the homologous arms, yielding a 5'-phosphate and a 3'-hydroxyl group; requires a central core of homology in the junction. The consensus cleavage sequence is 5'-(A/T)TT(C/G)-3'. Cleavage occurs on the 3'-side of the TT dinucleotide at the point of strand exchange. HJ branch migration catalyzed by RuvA-RuvB allows RuvC to scan DNA until it finds its consensus sequence, where it cleaves and resolves the cruciform DNA. The sequence is that of Crossover junction endodeoxyribonuclease RuvC from Methylococcus capsulatus (strain ATCC 33009 / NCIMB 11132 / Bath).